The sequence spans 136 residues: ATP synthase epsilon chain (136 aa).

It belongs to the ATPase epsilon chain family. In terms of assembly, F-type ATPases have 2 components, CF(1) - the catalytic core - and CF(0) - the membrane proton channel. CF(1) has five subunits: alpha(3), beta(3), gamma(1), delta(1), epsilon(1). CF(0) has three main subunits: a, b and c.

The protein localises to the cell membrane. In terms of biological role, produces ATP from ADP in the presence of a proton gradient across the membrane. In Exiguobacterium sp. (strain ATCC BAA-1283 / AT1b), this protein is ATP synthase epsilon chain.